Reading from the N-terminus, the 380-residue chain is Flagellar P-ring protein (380 aa).

The N-terminal stretch at 1–35 is a signal peptide; sequence MRFFTQSPFPLRTLTRRLTAFVCVGLLLLPGFTLA.

This sequence belongs to the FlgI family. The basal body constitutes a major portion of the flagellar organelle and consists of four rings (L,P,S, and M) mounted on a central rod.

It is found in the periplasm. It localises to the bacterial flagellum basal body. In terms of biological role, assembles around the rod to form the L-ring and probably protects the motor/basal body from shearing forces during rotation. The chain is Flagellar P-ring protein from Gluconobacter oxydans (strain 621H) (Gluconobacter suboxydans).